The chain runs to 382 residues: Regulatory protein RapC (382 aa).

TPR repeat units follow at residues 102-138 (YYVN…VADH), 149-182 (AEAY…NVRI), 183-216 (IQCH…AQAE), 223-256 (GRAY…FESS), and 263-296 (PQAY…AKET).

Belongs to the Rap family. As to quaternary structure, homodimer. Interacts specifically with the C-terminal DNA-binding domain of ComA. Interacts with CSF.

The protein localises to the cytoplasm. With respect to regulation, inhibited by the competence and sporulation stimulating factor (CSF), encoded by phrC, which prevents RapC-ComA interaction. Involved in the regulation of genetic competence development. Inhibits the activity of ComA, a transcriptional factor that regulates the development of genetic competence. Acts by binding to ComA, independently of its phosphorylation state, leading to the inhibition of ComA DNA-binding activity. Does not dephosphorylate phospho-ComA and does not affect the phosphorylation level of the ComP-ComA system. In Bacillus subtilis (strain 168), this protein is Regulatory protein RapC (rapC).